Reading from the N-terminus, the 339-residue chain is Tetraacyldisaccharide 4'-kinase (339 aa).

58-65 (TVGGSGKT) provides a ligand contact to ATP.

Belongs to the LpxK family.

It carries out the reaction a lipid A disaccharide + ATP = a lipid IVA + ADP + H(+). Its pathway is glycolipid biosynthesis; lipid IV(A) biosynthesis; lipid IV(A) from (3R)-3-hydroxytetradecanoyl-[acyl-carrier-protein] and UDP-N-acetyl-alpha-D-glucosamine: step 6/6. Transfers the gamma-phosphate of ATP to the 4'-position of a tetraacyldisaccharide 1-phosphate intermediate (termed DS-1-P) to form tetraacyldisaccharide 1,4'-bis-phosphate (lipid IVA). The polypeptide is Tetraacyldisaccharide 4'-kinase (Shewanella baltica (strain OS185)).